We begin with the raw amino-acid sequence, 364 residues long: Transcription elongation factor, mitochondrial (364 aa).

A mitochondrion-targeting transit peptide spans 1-39; the sequence is MAWRTNLACLIKAGGRRWFPVPEYSSLPPVLNNTCSVRK.

It belongs to the TEFM family. In terms of assembly, interacts with POLRMT.

It is found in the mitochondrion matrix. The protein resides in the mitochondrion nucleoid. Functionally, transcription elongation factor which increases mitochondrial RNA polymerase processivity. Regulates transcription of the mitochondrial genome, including genes important for the oxidative phosphorylation machinery. In Mus musculus (Mouse), this protein is Transcription elongation factor, mitochondrial (Tefm).